We begin with the raw amino-acid sequence, 376 residues long: Chaperone protein DnaJ (376 aa).

Positions 5–70 (DYYEVLGVAR…EKRARYDRFG (66 aa)) constitute a J domain. The CR-type zinc-finger motif lies at 137-215 (GDEVTLRLPK…CKGSGQTQQV (79 aa)). C150, C153, C167, C170, C189, C192, C203, and C206 together coordinate Zn(2+). CXXCXGXG motif repeat units follow at residues 150–157 (CDECGGSG), 167–174 (CRHCGGAG), 189–196 (CPVCRGEG), and 203–210 (CPKCKGSG).

This sequence belongs to the DnaJ family. As to quaternary structure, homodimer. The cofactor is Zn(2+).

It localises to the cytoplasm. Participates actively in the response to hyperosmotic and heat shock by preventing the aggregation of stress-denatured proteins and by disaggregating proteins, also in an autonomous, DnaK-independent fashion. Unfolded proteins bind initially to DnaJ; upon interaction with the DnaJ-bound protein, DnaK hydrolyzes its bound ATP, resulting in the formation of a stable complex. GrpE releases ADP from DnaK; ATP binding to DnaK triggers the release of the substrate protein, thus completing the reaction cycle. Several rounds of ATP-dependent interactions between DnaJ, DnaK and GrpE are required for fully efficient folding. Also involved, together with DnaK and GrpE, in the DNA replication of plasmids through activation of initiation proteins. This Nitratidesulfovibrio vulgaris (strain ATCC 29579 / DSM 644 / CCUG 34227 / NCIMB 8303 / VKM B-1760 / Hildenborough) (Desulfovibrio vulgaris) protein is Chaperone protein DnaJ.